A 102-amino-acid chain; its full sequence is Small ribosomal subunit protein uS10 (102 aa).

Belongs to the universal ribosomal protein uS10 family. Part of the 30S ribosomal subunit.

Functionally, involved in the binding of tRNA to the ribosomes. This chain is Small ribosomal subunit protein uS10, found in Lactobacillus delbrueckii subsp. bulgaricus (strain ATCC 11842 / DSM 20081 / BCRC 10696 / JCM 1002 / NBRC 13953 / NCIMB 11778 / NCTC 12712 / WDCM 00102 / Lb 14).